The chain runs to 307 residues: Aspartate carbamoyltransferase catalytic subunit (307 aa).

Residues Arg-54 and Thr-55 each coordinate carbamoyl phosphate. Residue Lys-83 participates in L-aspartate binding. Arg-104, His-132, and Gln-135 together coordinate carbamoyl phosphate. L-aspartate is bound by residues Arg-165 and Arg-228. Carbamoyl phosphate is bound by residues Leu-267 and Pro-268.

It belongs to the aspartate/ornithine carbamoyltransferase superfamily. ATCase family. As to quaternary structure, heterododecamer (2C3:3R2) of six catalytic PyrB chains organized as two trimers (C3), and six regulatory PyrI chains organized as three dimers (R2).

The enzyme catalyses carbamoyl phosphate + L-aspartate = N-carbamoyl-L-aspartate + phosphate + H(+). Its pathway is pyrimidine metabolism; UMP biosynthesis via de novo pathway; (S)-dihydroorotate from bicarbonate: step 2/3. In terms of biological role, catalyzes the condensation of carbamoyl phosphate and aspartate to form carbamoyl aspartate and inorganic phosphate, the committed step in the de novo pyrimidine nucleotide biosynthesis pathway. This Clostridium botulinum (strain Langeland / NCTC 10281 / Type F) protein is Aspartate carbamoyltransferase catalytic subunit.